The primary structure comprises 501 residues: Probable cytosol aminopeptidase (501 aa).

2 residues coordinate Mn(2+): lysine 268 and aspartate 273. Residue lysine 280 is part of the active site. Residues aspartate 291, aspartate 350, and glutamate 352 each coordinate Mn(2+). The active site involves arginine 354.

Belongs to the peptidase M17 family. The cofactor is Mn(2+).

It localises to the cytoplasm. It carries out the reaction Release of an N-terminal amino acid, Xaa-|-Yaa-, in which Xaa is preferably Leu, but may be other amino acids including Pro although not Arg or Lys, and Yaa may be Pro. Amino acid amides and methyl esters are also readily hydrolyzed, but rates on arylamides are exceedingly low.. The enzyme catalyses Release of an N-terminal amino acid, preferentially leucine, but not glutamic or aspartic acids.. In terms of biological role, presumably involved in the processing and regular turnover of intracellular proteins. Catalyzes the removal of unsubstituted N-terminal amino acids from various peptides. This chain is Probable cytosol aminopeptidase, found in Colwellia psychrerythraea (strain 34H / ATCC BAA-681) (Vibrio psychroerythus).